We begin with the raw amino-acid sequence, 381 residues long: MNYDVVIARYGEIGLKSSKVRARFERKLVKNIKAAIDCEVDRNQGRIYIFPKNYGECLENLNKVFGVVSYSPAVSTYGNYEDIEKTLGEYVDNLVDDGFIGKDTRFAIKCRRVGNHDFTSQEMAAFCGSVVVKKVGCPVDLTNPELKIYVEVRDDEAFIYHEKIDGPGGLPLGTQGKVVVLVSSGIDSPVAAYLMMKRGCEVIALHCDNAPFTGPKVHENFDKIIDQLQSYAKGVPITKKVVKYGEYLQQAKDCAPEKMTCVLCKSGMYKIAEKLAHKYGASAIVDGSSVGQVASQTLSNILATRHGVDMPILSPLIGLDKLEITRIAEDIGTFEISKLDDGGCHAVPKYPETKADVDRVEEACRAMNQKEAIEKAFDSID.

Residues 55–163 (GECLENLNKV…DDEAFIYHEK (109 aa)) enclose the THUMP domain. Residues 181-182 (LV), K265, G287, and Q296 each bind ATP.

Belongs to the ThiI family.

The protein resides in the cytoplasm. It carries out the reaction [ThiI sulfur-carrier protein]-S-sulfanyl-L-cysteine + a uridine in tRNA + 2 reduced [2Fe-2S]-[ferredoxin] + ATP + H(+) = [ThiI sulfur-carrier protein]-L-cysteine + a 4-thiouridine in tRNA + 2 oxidized [2Fe-2S]-[ferredoxin] + AMP + diphosphate. The enzyme catalyses [ThiS sulfur-carrier protein]-C-terminal Gly-Gly-AMP + S-sulfanyl-L-cysteinyl-[cysteine desulfurase] + AH2 = [ThiS sulfur-carrier protein]-C-terminal-Gly-aminoethanethioate + L-cysteinyl-[cysteine desulfurase] + A + AMP + 2 H(+). Its pathway is cofactor biosynthesis; thiamine diphosphate biosynthesis. In terms of biological role, catalyzes the ATP-dependent transfer of a sulfur to tRNA to produce 4-thiouridine in position 8 of tRNAs, which functions as a near-UV photosensor. Also catalyzes the transfer of sulfur to the sulfur carrier protein ThiS, forming ThiS-thiocarboxylate. This is a step in the synthesis of thiazole, in the thiamine biosynthesis pathway. The sulfur is donated as persulfide by IscS. In Methanobrevibacter smithii (strain ATCC 35061 / DSM 861 / OCM 144 / PS), this protein is Probable tRNA sulfurtransferase.